The sequence spans 216 residues: tRNA (guanine-N(7)-)-methyltransferase (216 aa).

The S-adenosyl-L-methionine site is built by Glu43, Asp68, Asn95, and Asn117. Residues Asp153 and 190–193 (TEYE) contribute to the substrate site.

This sequence belongs to the class I-like SAM-binding methyltransferase superfamily. TrmB family.

It catalyses the reaction guanosine(46) in tRNA + S-adenosyl-L-methionine = N(7)-methylguanosine(46) in tRNA + S-adenosyl-L-homocysteine. The protein operates within tRNA modification; N(7)-methylguanine-tRNA biosynthesis. In terms of biological role, catalyzes the formation of N(7)-methylguanine at position 46 (m7G46) in tRNA. The polypeptide is tRNA (guanine-N(7)-)-methyltransferase (Desulfitobacterium hafniense (strain Y51)).